A 334-amino-acid chain; its full sequence is Protein-methionine-sulfoxide reductase catalytic subunit MsrP (334 aa).

Residues 1-44 (MKKVSRLTEADVTAESAFFMQRRQVLKALGITTAALSLPTAAHA) constitute a signal peptide (tat-type signal). Residues N88, 91–92 (YE), C146, T181, N233, R238, and 249–251 (GIK) contribute to the Mo-molybdopterin site.

Belongs to the MsrP family. In terms of assembly, heterodimer of a catalytic subunit (MsrP) and a heme-binding subunit (MsrQ). Mo-molybdopterin is required as a cofactor. In terms of processing, predicted to be exported by the Tat system. The position of the signal peptide cleavage has not been experimentally proven.

It is found in the periplasm. It carries out the reaction L-methionyl-[protein] + a quinone + H2O = L-methionyl-(S)-S-oxide-[protein] + a quinol. The catalysed reaction is L-methionyl-[protein] + a quinone + H2O = L-methionyl-(R)-S-oxide-[protein] + a quinol. In terms of biological role, part of the MsrPQ system that repairs oxidized periplasmic proteins containing methionine sulfoxide residues (Met-O), using respiratory chain electrons. Thus protects these proteins from oxidative-stress damage caused by reactive species of oxygen and chlorine generated by the host defense mechanisms. MsrPQ is essential for the maintenance of envelope integrity under bleach stress, rescuing a wide series of structurally unrelated periplasmic proteins from methionine oxidation. The catalytic subunit MsrP is non-stereospecific, being able to reduce both (R-) and (S-) diastereoisomers of methionine sulfoxide. The sequence is that of Protein-methionine-sulfoxide reductase catalytic subunit MsrP from Cronobacter sakazakii (strain ATCC BAA-894) (Enterobacter sakazakii).